Consider the following 320-residue polypeptide: Ferrochelatase (320 aa).

Residues histidine 194 and glutamate 275 each contribute to the Fe cation site.

This sequence belongs to the ferrochelatase family. As to quaternary structure, monomer.

The protein resides in the cytoplasm. The catalysed reaction is heme b + 2 H(+) = protoporphyrin IX + Fe(2+). Its pathway is porphyrin-containing compound metabolism; protoheme biosynthesis; protoheme from protoporphyrin-IX: step 1/1. Its function is as follows. Catalyzes the ferrous insertion into protoporphyrin IX. This chain is Ferrochelatase, found in Shigella dysenteriae serotype 1 (strain Sd197).